The chain runs to 282 residues: Prohibitin-1 (282 aa).

The AIM signature appears at 106-109; that stretch reads YQNL.

This sequence belongs to the prohibitin family. The mitochondrial prohibitin complex consists of two subunits (phb1 and phb2). The subunits assemble into a membrane-associated ring-shaped supercomplex of approximately 1 mDa.

It is found in the mitochondrion inner membrane. Its subcellular location is the cytoplasm. In terms of biological role, prohibitin probably acts as a holdase/unfoldase for the stabilization of newly synthesized mitochondrial proteins. Involved in mitophagy; may act as an adapter for atg8 that supports mitophagosome assembly. Negatively regulates the proteolytic processing of atg32 via the i-AAA protease. Acts as a negative regulator of the m-AAA protease. This chain is Prohibitin-1 (phb1), found in Schizosaccharomyces pombe (strain 972 / ATCC 24843) (Fission yeast).